The following is a 399-amino-acid chain: S-adenosylmethionine synthase (399 aa).

Position 136–141 (136–141 (GTGSAD)) interacts with ATP.

This sequence belongs to the AdoMet synthase 2 family. The cofactor is Mg(2+).

The enzyme catalyses L-methionine + ATP + H2O = S-adenosyl-L-methionine + phosphate + diphosphate. Its pathway is amino-acid biosynthesis; S-adenosyl-L-methionine biosynthesis; S-adenosyl-L-methionine from L-methionine: step 1/1. Its function is as follows. Catalyzes the formation of S-adenosylmethionine from methionine and ATP. This Methanothrix thermoacetophila (strain DSM 6194 / JCM 14653 / NBRC 101360 / PT) (Methanosaeta thermophila) protein is S-adenosylmethionine synthase.